Here is a 202-residue protein sequence, read N- to C-terminus: Nucleoside triphosphate pyrophosphatase (202 aa).

Asp79 (proton acceptor) is an active-site residue.

The protein belongs to the Maf family. Requires a divalent metal cation as cofactor.

The protein localises to the cytoplasm. It catalyses the reaction a ribonucleoside 5'-triphosphate + H2O = a ribonucleoside 5'-phosphate + diphosphate + H(+). The enzyme catalyses a 2'-deoxyribonucleoside 5'-triphosphate + H2O = a 2'-deoxyribonucleoside 5'-phosphate + diphosphate + H(+). Functionally, nucleoside triphosphate pyrophosphatase. May have a dual role in cell division arrest and in preventing the incorporation of modified nucleotides into cellular nucleic acids. This chain is Nucleoside triphosphate pyrophosphatase, found in Rhodospirillum rubrum (strain ATCC 11170 / ATH 1.1.1 / DSM 467 / LMG 4362 / NCIMB 8255 / S1).